Reading from the N-terminus, the 220-residue chain is Early protein OPG038 (220 aa).

A signal peptide spans 1–17; it reads MVYKLVLLFCIASLGYS. Residues Asn49, Asn79, Asn118, and Asn154 are each glycosylated (N-linked (GlcNAc...) asparagine; by host).

The protein belongs to the orthopoxvirus OPG038 family. In terms of assembly, homooligomer. Interacts with host CD80 and CD86 when secreted. Glycosylated by host.

It localises to the host endoplasmic reticulum. It is found in the secreted. Its function is as follows. Plays a role in immune evasion. When secreted, inhibits T-cell activation by preventing the binding of host CD80 and CD86 to soluble CTLA4 and CD28. In the infected cell, may inhibits host NF kappa B activation. This is Early protein OPG038 (OPG038) from Cynomys gunnisoni (Gunnison's prairie dog).